Here is a 383-residue protein sequence, read N- to C-terminus: Probable arabinan endo-1,5-alpha-L-arabinosidase D (383 aa).

The first 22 residues, 1–22, serve as a signal peptide directing secretion; the sequence is MVHITLPGLLLCLCLYLSVAPA. The Proton acceptor role is filled by Asp-49. Residues Asn-75, Asn-163, and Asn-206 are each glycosylated (N-linked (GlcNAc...) asparagine). Glu-227 acts as the Proton donor in catalysis. A glycan (N-linked (GlcNAc...) asparagine) is linked at Asn-325. The GPI-anchor amidated asparagine moiety is linked to residue Asn-356. Positions 357–383 are cleaved as a propeptide — removed in mature form; sequence PGNSLQPPSSVSLQIVAFLCLVILFTL.

This sequence belongs to the glycosyl hydrolase 43 family.

Its subcellular location is the cell membrane. It catalyses the reaction Endohydrolysis of (1-&gt;5)-alpha-arabinofuranosidic linkages in (1-&gt;5)-arabinans.. It participates in glycan metabolism; L-arabinan degradation. Endo-1,5-alpha-L-arabinanase involved in degradation of pectin. Its preferred substrate is linear 1,5-alpha-L-arabinan. In Emericella nidulans (strain FGSC A4 / ATCC 38163 / CBS 112.46 / NRRL 194 / M139) (Aspergillus nidulans), this protein is Probable arabinan endo-1,5-alpha-L-arabinosidase D (abnD).